A 360-amino-acid chain; its full sequence is Phosphoserine aminotransferase (360 aa).

An L-glutamate-binding site is contributed by Arg41. Residues Trp101, Thr152, Asp172, and Gln195 each contribute to the pyridoxal 5'-phosphate site. An N6-(pyridoxal phosphate)lysine modification is found at Lys196. Asn237–Thr238 lines the pyridoxal 5'-phosphate pocket.

This sequence belongs to the class-V pyridoxal-phosphate-dependent aminotransferase family. SerC subfamily. Homodimer. It depends on pyridoxal 5'-phosphate as a cofactor.

It is found in the cytoplasm. It catalyses the reaction O-phospho-L-serine + 2-oxoglutarate = 3-phosphooxypyruvate + L-glutamate. The enzyme catalyses 4-(phosphooxy)-L-threonine + 2-oxoglutarate = (R)-3-hydroxy-2-oxo-4-phosphooxybutanoate + L-glutamate. It participates in amino-acid biosynthesis; L-serine biosynthesis; L-serine from 3-phospho-D-glycerate: step 2/3. The protein operates within cofactor biosynthesis; pyridoxine 5'-phosphate biosynthesis; pyridoxine 5'-phosphate from D-erythrose 4-phosphate: step 3/5. Functionally, catalyzes the reversible conversion of 3-phosphohydroxypyruvate to phosphoserine and of 3-hydroxy-2-oxo-4-phosphonooxybutanoate to phosphohydroxythreonine. The sequence is that of Phosphoserine aminotransferase from Paraburkholderia phymatum (strain DSM 17167 / CIP 108236 / LMG 21445 / STM815) (Burkholderia phymatum).